Reading from the N-terminus, the 463-residue chain is ATP synthase subunit beta (463 aa).

152–159 (GGAGVGKT) is a binding site for ATP.

It belongs to the ATPase alpha/beta chains family. As to quaternary structure, F-type ATPases have 2 components, CF(1) - the catalytic core - and CF(0) - the membrane proton channel. CF(1) has five subunits: alpha(3), beta(3), gamma(1), delta(1), epsilon(1). CF(0) has three main subunits: a(1), b(2) and c(9-12). The alpha and beta chains form an alternating ring which encloses part of the gamma chain. CF(1) is attached to CF(0) by a central stalk formed by the gamma and epsilon chains, while a peripheral stalk is formed by the delta and b chains.

Its subcellular location is the cell inner membrane. The enzyme catalyses ATP + H2O + 4 H(+)(in) = ADP + phosphate + 5 H(+)(out). Functionally, produces ATP from ADP in the presence of a proton gradient across the membrane. The catalytic sites are hosted primarily by the beta subunits. The chain is ATP synthase subunit beta from Shewanella sp. (strain MR-7).